We begin with the raw amino-acid sequence, 62 residues long: Alpha-toxin Tf4 (62 aa).

One can recognise an LCN-type CS-alpha/beta domain in the interval 2-62; that stretch reads KEGYPADSKG…SVWDSATNKC (61 aa). Disulfide bonds link C12–C62, C16–C38, C24–C43, and C28–C45. C62 bears the Cysteine amide mark.

In terms of tissue distribution, expressed by the venom gland.

It localises to the secreted. Alpha toxins bind voltage-independently at site-3 of sodium channels (Nav) and inhibit the inactivation of the activated channels, thereby blocking neuronal transmission. This toxin is toxic to frogs but non-toxic to insect larvae (T.molitor), mammals (rats) and crustaceans (crabs) at the doses assayed. The protein is Alpha-toxin Tf4 of Tityus fasciolatus (Central Brazilian scorpion).